Consider the following 1710-residue polypeptide: Latrophilin Cirl (1710 aa).

At 1–767 the chain is on the extracellular side; that stretch reads MLPTILSISY…LFTMFDGNMR (767 aa). The SUEL-type lectin domain occupies 25–114; that stretch reads ACEGKKLTIE…KYLEAHYQCI (90 aa). N-linked (GlcNAc...) asparagine glycosylation is present at asparagine 142. The segment at 183–304 is disordered; that stretch reads QHTAVTHSTP…SGSVVPGNGS (122 aa). 2 stretches are compositionally biased toward polar residues: residues 185 to 198 and 256 to 265; these read TAVT…STTA and NATSPSNTRI. An N-linked (GlcNAc...) asparagine glycan is attached at asparagine 256. Low complexity-rich tracts occupy residues 275–285 and 295–304; these read DDGTLLTTKSS and SGSVVPGNGS. N-linked (GlcNAc...) asparagine glycans are attached at residues asparagine 302 and asparagine 341. The disordered stretch occupies residues 376 to 400; the sequence is YDEYDDDPSSTTPATSSADCLHNSS. Over residues 384–394 the composition is skewed to low complexity; the sequence is SSTTPATSSAD. Residues asparagine 398, asparagine 655, asparagine 703, and asparagine 730 are each glycosylated (N-linked (GlcNAc...) asparagine). The GAIN-B domain maps to 561-754; the sequence is RSVVQKVKNI…AILMDVVDEH (194 aa). Intrachain disulfides connect cysteine 709-cysteine 736 and cysteine 724-cysteine 738. Residues 709 to 754 form a GPS region; it reads CVFWNYIDHAWSANGCSLESTNRTHSVCSCNHLTNFAILMDVVDEH. The helical transmembrane segment at 768–788 threads the bilayer; sequence IFIYISIGICVVFIVIALLTL. At 789–801 the chain is on the cytoplasmic side; the sequence is KLFNGVFVKSART. The helical transmembrane segment at 802 to 822 threads the bilayer; sequence SIYTSIYLCLLAIELLFLLGI. Over 823 to 828 the chain is Extracellular; the sequence is EQTETS. The helical transmembrane segment at 829 to 849 threads the bilayer; the sequence is IFCGFITIFLHCAILSGTAWF. Residues 850 to 875 lie on the Cytoplasmic side of the membrane; sequence CYEAFHSYSTLTSDELLLEVDQTPKV. Residues 876–896 traverse the membrane as a helical segment; it reads NCYYLLSYGLSLSVVAISLVI. The Extracellular portion of the chain corresponds to 897-920; that stretch reads DPSTYTQNDYCVLMEANALFYATF. A helical transmembrane segment spans residues 921 to 941; sequence VMPVLVFFVAAIGYTFLSWII. Residues 942 to 968 lie on the Cytoplasmic side of the membrane; it reads MCRKSRTGLKTKEHTRLASVRFDIRCS. Residues 969–989 traverse the membrane as a helical segment; it reads FVFLLLLSAVWCSAYFYLRGA. Over 990-999 the chain is Extracellular; sequence KMDDDTADVY. Residues 1000 to 1020 form a helical membrane-spanning segment; the sequence is GYCFICFNTLLGLYIFVFHCI. Residues 1021 to 1710 lie on the Cytoplasmic side of the membrane; sequence QNEKIRREYR…VRCYLEPLAK (690 aa). Phosphoserine is present on residues serine 1156, serine 1253, serine 1260, serine 1329, and serine 1330. Residues 1234 to 1259 are disordered; the sequence is KPNSGQHGKKKRGAGGVPASPSGSLH. Disordered stretches follow at residues 1452–1540 and 1568–1690; these read GGGS…SDER and DYGA…QQRH. Low complexity predominate over residues 1458–1483; sequence GGSVSSRSQQQQLKKQQQQQSLAQQR. Acidic residues-rich tracts occupy residues 1491-1505 and 1515-1528; these read DDDD…EEAT and CDED…DLED. Positions 1638–1650 are enriched in polar residues; the sequence is QTPAQKRQQLQKL. Over residues 1651-1672 the composition is skewed to low complexity; the sequence is SPQSTTSSSSHTSHSNPNPHPH. Residues 1673 to 1689 show a composition bias toward basic residues; it reads QLTHPHPHQHPPHHQQR.

The protein belongs to the G-protein coupled receptor 2 family. LN-TM7 subfamily. In terms of assembly, forms a heterodimer, consisting of a large extracellular region non-covalently linked to a seven-transmembrane moiety. In terms of processing, proteolytically cleaved into 2 subunits, an extracellular subunit and a seven-transmembrane subunit.

Its subcellular location is the cell membrane. This Drosophila erecta (Fruit fly) protein is Latrophilin Cirl.